The chain runs to 343 residues: CRISPR-associated endonuclease Cas1 1 (343 aa).

Residues glutamate 166, histidine 234, and glutamate 249 each coordinate Mn(2+).

Belongs to the CRISPR-associated endonuclease Cas1 family. As to quaternary structure, homodimer, forms a heterotetramer with a Cas2 homodimer. Requires Mg(2+) as cofactor. Mn(2+) serves as cofactor.

In terms of biological role, CRISPR (clustered regularly interspaced short palindromic repeat), is an adaptive immune system that provides protection against mobile genetic elements (viruses, transposable elements and conjugative plasmids). CRISPR clusters contain spacers, sequences complementary to antecedent mobile elements, and target invading nucleic acids. CRISPR clusters are transcribed and processed into CRISPR RNA (crRNA). Acts as a dsDNA endonuclease. Involved in the integration of spacer DNA into the CRISPR cassette. The sequence is that of CRISPR-associated endonuclease Cas1 1 from Moorella thermoacetica (strain ATCC 39073 / JCM 9320).